Here is a 554-residue protein sequence, read N- to C-terminus: Serine/threonine-protein phosphatase 2B catalytic subunit (554 aa).

Fe cation contacts are provided by aspartate 119, histidine 121, and aspartate 147. Zn(2+) contacts are provided by aspartate 147 and asparagine 179. The active-site Proton donor is histidine 180. Positions 228 and 310 each coordinate Zn(2+). A disordered region spans residues 411 to 433 (LKESAPTQHKQPAPSENENKADQ). Residues 415–426 (APTQHKQPAPSE) show a composition bias toward polar residues.

This sequence belongs to the PPP phosphatase family. PP-2B subfamily. As to quaternary structure, composed of two components (A and B), the A component is the catalytic subunit and the B component confers calcium sensitivity. It depends on Fe(3+) as a cofactor. Zn(2+) serves as cofactor.

The catalysed reaction is O-phospho-L-seryl-[protein] + H2O = L-seryl-[protein] + phosphate. It catalyses the reaction O-phospho-L-threonyl-[protein] + H2O = L-threonyl-[protein] + phosphate. Calcium-dependent, calmodulin-stimulated protein phosphatase. This subunit may have a role in the calmodulin activation of calcineurin. Appears to be involved in cytokinesis, mating, transport, nuclear and spindle pole body positioning, and cell shape. The polypeptide is Serine/threonine-protein phosphatase 2B catalytic subunit (ppb1) (Schizosaccharomyces pombe (strain 972 / ATCC 24843) (Fission yeast)).